A 434-amino-acid chain; its full sequence is UDP-glucose 6-dehydrogenase (434 aa).

Residues 2 to 19 (NITFIGSGYVGLVSGIIM), V11, D30, K35, T121, and E152 contribute to the NAD(+) site. Residues 148–152 (EFLRE), K204, N208, 249–253 (FLNAG), and G257 each bind substrate. C260 (nucleophile) is an active-site residue. K263 contributes to the NAD(+) binding site. Position 321 (K321) interacts with substrate. Residue R328 coordinates NAD(+).

This sequence belongs to the UDP-glucose/GDP-mannose dehydrogenase family.

It carries out the reaction UDP-alpha-D-glucose + 2 NAD(+) + H2O = UDP-alpha-D-glucuronate + 2 NADH + 3 H(+). It participates in nucleotide-sugar biosynthesis; UDP-alpha-D-glucuronate biosynthesis; UDP-alpha-D-glucuronate from UDP-alpha-D-glucose: step 1/1. This Rickettsia prowazekii (strain Madrid E) protein is UDP-glucose 6-dehydrogenase (udg).